A 395-amino-acid polypeptide reads, in one-letter code: Argininosuccinate synthase (395 aa).

ATP contacts are provided by residues 6–14 and Ala-33; that span reads AYSGGLDTS. Tyr-84 serves as a coordination point for L-citrulline. Gly-114 is an ATP binding site. L-aspartate-binding residues include Thr-116, Asn-120, and Asp-121. Residue Asn-120 participates in L-citrulline binding. 5 residues coordinate L-citrulline: Arg-124, Ser-173, Ser-182, Glu-258, and Tyr-270.

It belongs to the argininosuccinate synthase family. Type 1 subfamily. Homotetramer.

It localises to the cytoplasm. It catalyses the reaction L-citrulline + L-aspartate + ATP = 2-(N(omega)-L-arginino)succinate + AMP + diphosphate + H(+). It functions in the pathway amino-acid biosynthesis; L-arginine biosynthesis; L-arginine from L-ornithine and carbamoyl phosphate: step 2/3. The polypeptide is Argininosuccinate synthase (Rhodococcoides fascians (Rhodococcus fascians)).